The sequence spans 319 residues: 4-diphosphocytidyl-2-C-methyl-D-erythritol kinase (319 aa).

Residue Lys-21 is part of the active site. 106–116 (PIGAGLAGGSS) serves as a coordination point for ATP. Asp-148 is an active-site residue.

This sequence belongs to the GHMP kinase family. IspE subfamily.

It carries out the reaction 4-CDP-2-C-methyl-D-erythritol + ATP = 4-CDP-2-C-methyl-D-erythritol 2-phosphate + ADP + H(+). It participates in isoprenoid biosynthesis; isopentenyl diphosphate biosynthesis via DXP pathway; isopentenyl diphosphate from 1-deoxy-D-xylulose 5-phosphate: step 3/6. In terms of biological role, catalyzes the phosphorylation of the position 2 hydroxy group of 4-diphosphocytidyl-2C-methyl-D-erythritol. In Prochlorococcus marinus (strain MIT 9303), this protein is 4-diphosphocytidyl-2-C-methyl-D-erythritol kinase.